The chain runs to 235 residues: Ubiquinone/menaquinone biosynthesis C-methyltransferase UbiE (235 aa).

S-adenosyl-L-methionine contacts are provided by threonine 60 and aspartate 81.

This sequence belongs to the class I-like SAM-binding methyltransferase superfamily. MenG/UbiE family.

The catalysed reaction is a 2-demethylmenaquinol + S-adenosyl-L-methionine = a menaquinol + S-adenosyl-L-homocysteine + H(+). It catalyses the reaction a 2-methoxy-6-(all-trans-polyprenyl)benzene-1,4-diol + S-adenosyl-L-methionine = a 5-methoxy-2-methyl-3-(all-trans-polyprenyl)benzene-1,4-diol + S-adenosyl-L-homocysteine + H(+). Its pathway is quinol/quinone metabolism; menaquinone biosynthesis; menaquinol from 1,4-dihydroxy-2-naphthoate: step 2/2. The protein operates within cofactor biosynthesis; ubiquinone biosynthesis. In terms of biological role, methyltransferase required for the conversion of demethylmenaquinol (DMKH2) to menaquinol (MKH2) and the conversion of 2-polyprenyl-6-methoxy-1,4-benzoquinol (DDMQH2) to 2-polyprenyl-3-methyl-6-methoxy-1,4-benzoquinol (DMQH2). In Geotalea daltonii (strain DSM 22248 / JCM 15807 / FRC-32) (Geobacter daltonii), this protein is Ubiquinone/menaquinone biosynthesis C-methyltransferase UbiE.